Reading from the N-terminus, the 331-residue chain is Peroxidase 69 (331 aa).

Positions 1–23 (MGRGYNLLFVLVTFLVLVAAVTA) are cleaved as a signal peptide. Intrachain disulfides connect C46-C122, C79-C84, C128-C327, and C205-C237. The Proton acceptor role is filled by H77. Positions 78, 81, 83, 85, and 87 each coordinate Ca(2+). N-linked (GlcNAc...) asparagine glycosylation is present at N93. P168 contributes to the substrate binding site. H198 contacts heme b. T199 contributes to the Ca(2+) binding site. Residue N216 is glycosylated (N-linked (GlcNAc...) asparagine). D248, S251, and D256 together coordinate Ca(2+).

The protein belongs to the peroxidase family. Classical plant (class III) peroxidase subfamily. Heme b serves as cofactor. The cofactor is Ca(2+). In terms of tissue distribution, mainly expressed in roots and slightly in leaves.

The protein localises to the secreted. The catalysed reaction is 2 a phenolic donor + H2O2 = 2 a phenolic radical donor + 2 H2O. Functionally, removal of H(2)O(2), oxidation of toxic reductants, biosynthesis and degradation of lignin, suberization, auxin catabolism, response to environmental stresses such as wounding, pathogen attack and oxidative stress. These functions might be dependent on each isozyme/isoform in each plant tissue. The sequence is that of Peroxidase 69 (PER69) from Arabidopsis thaliana (Mouse-ear cress).